The primary structure comprises 524 residues: Nif-specific regulatory protein (524 aa).

Positions 1–182 are a domain; it reads MIHKSDSDTT…AQTIRLMILP (182 aa). Residues 35-176 enclose the GAF domain; the sequence is EASKTLQEVL…TVANLIAQTI (142 aa). A Sigma-54 factor interaction domain is found at 212–481; the sequence is MVGKSPAMRQ…DGWLDNSLDE (270 aa). ATP contacts are provided by residues 240–247 and 303–312; these read GESGTGKE and ADGGTLFLDE. The C-terminal DNA-binding domain stretch occupies residues 482–524; sequence RQRLIAALEKAGWVQAKAARLLGMTPRQVAYRIQIMDITMPRL. Positions 496–515 form a DNA-binding region, H-T-H motif; sequence QAKAARLLGMTPRQVAYRIQ.

As to quaternary structure, interacts with sigma-54.

In terms of biological role, required for activation of most nif operons, which are directly involved in nitrogen fixation. This Klebsiella oxytoca protein is Nif-specific regulatory protein (nifA).